Here is a 450-residue protein sequence, read N- to C-terminus: Ceramide glucosyltransferase (450 aa).

Residues 1 to 8 (MSDSGTLS) are Lumenal-facing. The helical transmembrane segment at 9–29 (LIGGIVFLVLWVVVWSICLLG) threads the bilayer. The Cytoplasmic segment spans residues 30 to 337 (WRTARIRYAH…IRVRKKMTLA (308 aa)). A short sequence motif (D1) is located at residue Asp-96. Asp-148 is a short sequence motif (D2). Residue Asp-286 is a short sequence motif, D3. Asp-286 functions as the Proton acceptor in the catalytic mechanism. The (Q/R)XXRW motif lies at 323–327 (RRVRW). The chain crosses the membrane as a helical span at residues 338–358 (ATLLEPLTESIISGLYGAWAI). Residues 359–361 (SRL) are Lumenal-facing. The helical transmembrane segment at 362–382 (LGGNILPLFLLHMAAWISVDI) threads the bilayer. Topologically, residues 383–401 (STKRALETNIKGIGPPESK) are cytoplasmic. Residues 402–422 (VTFLMAWAARECLALPIWMLA) form a helical membrane-spanning segment. Topologically, residues 423–450 (MTSSEVVWRGQKYKIIASGEAIRLGDRN) are lumenal.

Belongs to the glycosyltransferase 2 family.

The protein localises to the golgi apparatus membrane. It carries out the reaction an N-acylsphing-4-enine + UDP-alpha-D-glucose = a beta-D-glucosyl-(1&lt;-&gt;1')-N-acylsphing-4-enine + UDP + H(+). It functions in the pathway lipid metabolism; sphingolipid metabolism. Catalyzes the final step in the biosynthesis of the membrane lipid glucosylceramide (GluCer), the transfer of glucose to ceramide. Glucosylceramides play important roles in growth, differentiation and pathogenicity. Essential factor in determining the success of fungal infection by regulating survival of yeast cells during the initial colonization of the host lung. This Cryptococcus neoformans var. grubii serotype A (strain H99 / ATCC 208821 / CBS 10515 / FGSC 9487) (Filobasidiella neoformans var. grubii) protein is Ceramide glucosyltransferase.